The sequence spans 80 residues: Raniseptin-2 (80 aa).

The first 22 residues, 1–22, serve as a signal peptide directing secretion; sequence MAFLKKSLFLVLFLGIVSLSIC. Positions 23–49 are excised as a propeptide; it reads EEEKRVGEEEEKQEEENEELSEEELRE. Residues 27-46 form a disordered region; the sequence is RVGEEEEKQEEENEELSEEE. Residues 30–44 show a composition bias toward acidic residues; sequence EEEEKQEEENEELSE.

This sequence belongs to the frog skin active peptide (FSAP) family. Dermaseptin subfamily. As to expression, expressed by the skin glands.

The protein resides in the secreted. Functionally, has antibacterial activity. The polypeptide is Raniseptin-2 (Boana raniceps (Chaco tree frog)).